A 349-amino-acid polypeptide reads, in one-letter code: Nicotinate-nucleotide--dimethylbenzimidazole phosphoribosyltransferase (349 aa).

The Proton acceptor role is filled by Glu-313.

This sequence belongs to the CobT family.

It catalyses the reaction 5,6-dimethylbenzimidazole + nicotinate beta-D-ribonucleotide = alpha-ribazole 5'-phosphate + nicotinate + H(+). Its pathway is nucleoside biosynthesis; alpha-ribazole biosynthesis; alpha-ribazole from 5,6-dimethylbenzimidazole: step 1/2. In terms of biological role, catalyzes the synthesis of alpha-ribazole-5'-phosphate from nicotinate mononucleotide (NAMN) and 5,6-dimethylbenzimidazole (DMB). The chain is Nicotinate-nucleotide--dimethylbenzimidazole phosphoribosyltransferase from Mycobacterium avium (strain 104).